Here is a 93-residue protein sequence, read N- to C-terminus: Small ribosomal subunit protein uS19 (93 aa).

This sequence belongs to the universal ribosomal protein uS19 family.

Its function is as follows. Protein S19 forms a complex with S13 that binds strongly to the 16S ribosomal RNA. This chain is Small ribosomal subunit protein uS19, found in Tropheryma whipplei (strain TW08/27) (Whipple's bacillus).